The following is an 88-amino-acid chain: DNA-directed RNA polymerase subunit omega (88 aa).

This sequence belongs to the RNA polymerase subunit omega family. The RNAP catalytic core consists of 2 alpha, 1 beta, 1 beta' and 1 omega subunit. When a sigma factor is associated with the core the holoenzyme is formed, which can initiate transcription.

The enzyme catalyses RNA(n) + a ribonucleoside 5'-triphosphate = RNA(n+1) + diphosphate. Promotes RNA polymerase assembly. Latches the N- and C-terminal regions of the beta' subunit thereby facilitating its interaction with the beta and alpha subunits. The polypeptide is DNA-directed RNA polymerase subunit omega (Haemophilus influenzae (strain 86-028NP)).